Consider the following 238-residue polypeptide: Large ribosomal subunit protein uL3 (238 aa).

2 disordered regions span residues 140–164 (SHRS…KMPG) and 212–238 (LPKE…QEGA). Glutamine 151 is subject to N5-methylglutamine. Positions 225–238 (AGGEAEAAAQQEGA) are enriched in low complexity.

The protein belongs to the universal ribosomal protein uL3 family. As to quaternary structure, part of the 50S ribosomal subunit. Forms a cluster with proteins L14 and L19. Post-translationally, methylated by PrmB.

Its function is as follows. One of the primary rRNA binding proteins, it binds directly near the 3'-end of the 23S rRNA, where it nucleates assembly of the 50S subunit. This is Large ribosomal subunit protein uL3 from Bradyrhizobium diazoefficiens (strain JCM 10833 / BCRC 13528 / IAM 13628 / NBRC 14792 / USDA 110).